Consider the following 224-residue polypeptide: LexA repressor (224 aa).

Residues 31–51 (RAEIATELGFRSANAAEEHLQ) constitute a DNA-binding region (H-T-H motif). Residues S142 and K179 each act as for autocatalytic cleavage activity in the active site.

It belongs to the peptidase S24 family. Homodimer.

The enzyme catalyses Hydrolysis of Ala-|-Gly bond in repressor LexA.. Functionally, represses a number of genes involved in the response to DNA damage (SOS response), including recA and lexA. In the presence of single-stranded DNA, RecA interacts with LexA causing an autocatalytic cleavage which disrupts the DNA-binding part of LexA, leading to derepression of the SOS regulon and eventually DNA repair. The polypeptide is LexA repressor (Albidiferax ferrireducens (strain ATCC BAA-621 / DSM 15236 / T118) (Rhodoferax ferrireducens)).